The primary structure comprises 185 residues: Dihydrofolate reductase (185 aa).

Residues 5–184 (KLNLIAAACD…ISYYFRVYKK (180 aa)) form the DHFR domain. NADP(+) is bound by residues Ala11 and 17 to 23 (GIGVNGA). Residue 31–36 (EMAYFT) coordinates substrate. 55 to 57 (RRT) serves as a coordination point for NADP(+). Arg71 is a binding site for substrate. NADP(+) contacts are provided by residues 77–79 (THN) and 117–124 (GGSSIYRA).

This sequence belongs to the dihydrofolate reductase family.

It catalyses the reaction (6S)-5,6,7,8-tetrahydrofolate + NADP(+) = 7,8-dihydrofolate + NADPH + H(+). The protein operates within cofactor biosynthesis; tetrahydrofolate biosynthesis; 5,6,7,8-tetrahydrofolate from 7,8-dihydrofolate: step 1/1. Its activity is regulated as follows. Activated by dithiothreitol and p-chloromercuribenzoate. Inhibited by trimethoprim, methotrexate, sodium tetrathionate and hydroxymercuribenzoate. In terms of biological role, key enzyme in folate metabolism. Catalyzes an essential reaction for de novo glycine and purine synthesis, and for DNA precursor synthesis. This Heliothis virescens (Tobacco budworm moth) protein is Dihydrofolate reductase (DHFR).